Reading from the N-terminus, the 179-residue chain is Large ribosomal subunit protein uL16m (179 aa).

It belongs to the universal ribosomal protein uL16 family. Component of the mitochondrial ribosome large subunit.

The protein resides in the mitochondrion. The sequence is that of Large ribosomal subunit protein uL16m (RPL16) from Arabidopsis thaliana (Mouse-ear cress).